A 181-amino-acid chain; its full sequence is Adenylate kinase (181 aa).

Gly-10–Thr-15 provides a ligand contact to ATP. Residues Ser-30 to Val-59 form an NMP region. Residues Thr-31, Arg-36, Lys-57 to Val-59, Gly-85 to Arg-88, and Gln-92 each bind AMP. Residues Ser-126 to Asp-132 are LID. ATP is bound at residue Arg-127. Residues Arg-129 and Arg-140 each contribute to the AMP site. Position 166 (Gly-166) interacts with ATP.

It belongs to the adenylate kinase family. As to quaternary structure, monomer.

It localises to the cytoplasm. The catalysed reaction is AMP + ATP = 2 ADP. The protein operates within purine metabolism; AMP biosynthesis via salvage pathway; AMP from ADP: step 1/1. Its function is as follows. Catalyzes the reversible transfer of the terminal phosphate group between ATP and AMP. Plays an important role in cellular energy homeostasis and in adenine nucleotide metabolism. The protein is Adenylate kinase of Corynebacterium glutamicum (strain R).